We begin with the raw amino-acid sequence, 628 residues long: Beta-galactosidase large subunit (628 aa).

The active-site Proton donor is the Glu468. Catalysis depends on Glu536, which acts as the Nucleophile.

Belongs to the glycosyl hydrolase 2 family. As to quaternary structure, heterodimer of a large (LacL) and a small subunit (LacM).

The enzyme catalyses Hydrolysis of terminal non-reducing beta-D-galactose residues in beta-D-galactosides.. Its function is as follows. Component of a beta-galactosidase. This Lactobacillus acidophilus (strain ATCC 700396 / NCK56 / N2 / NCFM) protein is Beta-galactosidase large subunit (lacL).